The sequence spans 634 residues: Lamin tail domain-containing protein 2 (634 aa).

The tract at residues Met-1–Ala-44 is disordered. Residues Ser-106–Arg-169 are a coiled coil. A compositionally biased stretch (polar residues) spans Phe-228–Gln-237. Disordered regions lie at residues Phe-228 to Asp-349 and His-464 to Ala-575. A compositionally biased stretch (low complexity) spans Ser-276–Ser-287. Positions Ser-310 to Ser-321 are enriched in polar residues. Basic and acidic residues predominate over residues Arg-322–Glu-337. The LTD domain occupies His-350–Arg-468. The span at Pro-502–Arg-513 shows a compositional bias: basic residues. Basic and acidic residues predominate over residues His-540–Asn-550.

The sequence is that of Lamin tail domain-containing protein 2 (LMNTD2) from Homo sapiens (Human).